Consider the following 541-residue polypeptide: Chaperonin GroEL 1 (541 aa).

Residues 29–32, 86–90, glycine 413, and aspartate 492 each bind ATP; these read TLGP and DGTTT.

Belongs to the chaperonin (HSP60) family. As to quaternary structure, forms a cylinder of 14 subunits composed of two heptameric rings stacked back-to-back. Interacts with the co-chaperonin GroES.

Its subcellular location is the cytoplasm. The catalysed reaction is ATP + H2O + a folded polypeptide = ADP + phosphate + an unfolded polypeptide.. Together with its co-chaperonin GroES, plays an essential role in assisting protein folding. The GroEL-GroES system forms a nano-cage that allows encapsulation of the non-native substrate proteins and provides a physical environment optimized to promote and accelerate protein folding. The polypeptide is Chaperonin GroEL 1 (Rhodococcus jostii (strain RHA1)).